A 56-amino-acid polypeptide reads, in one-letter code: Small ribosomal subunit protein uS14 (56 aa).

Zn(2+)-binding residues include Cys21, Cys24, Cys39, and Cys42.

The protein belongs to the universal ribosomal protein uS14 family. In terms of assembly, component of the 40S small ribosomal subunit. It depends on Zn(2+) as a cofactor.

It localises to the cytoplasm. The protein localises to the cytosol. The protein resides in the rough endoplasmic reticulum. In Scarabaeus laticollis (Scarab dung beetle), this protein is Small ribosomal subunit protein uS14 (RpS29).